The chain runs to 380 residues: Queuine tRNA-ribosyltransferase (380 aa).

The Proton acceptor role is filled by D96. Residues 96–100 (DSGGF), D150, Q193, and G220 contribute to the substrate site. The interval 251–257 (GVGAPDS) is RNA binding. D270 (nucleophile) is an active-site residue. Residues 275–279 (TRIAR) are RNA binding; important for wobble base 34 recognition. The Zn(2+) site is built by C308, C310, C313, and H339.

It belongs to the queuine tRNA-ribosyltransferase family. Homodimer. Within each dimer, one monomer is responsible for RNA recognition and catalysis, while the other monomer binds to the replacement base PreQ1. Zn(2+) is required as a cofactor.

It carries out the reaction 7-aminomethyl-7-carbaguanine + guanosine(34) in tRNA = 7-aminomethyl-7-carbaguanosine(34) in tRNA + guanine. The protein operates within tRNA modification; tRNA-queuosine biosynthesis. Its function is as follows. Catalyzes the base-exchange of a guanine (G) residue with the queuine precursor 7-aminomethyl-7-deazaguanine (PreQ1) at position 34 (anticodon wobble position) in tRNAs with GU(N) anticodons (tRNA-Asp, -Asn, -His and -Tyr). Catalysis occurs through a double-displacement mechanism. The nucleophile active site attacks the C1' of nucleotide 34 to detach the guanine base from the RNA, forming a covalent enzyme-RNA intermediate. The proton acceptor active site deprotonates the incoming PreQ1, allowing a nucleophilic attack on the C1' of the ribose to form the product. After dissociation, two additional enzymatic reactions on the tRNA convert PreQ1 to queuine (Q), resulting in the hypermodified nucleoside queuosine (7-(((4,5-cis-dihydroxy-2-cyclopenten-1-yl)amino)methyl)-7-deazaguanosine). This chain is Queuine tRNA-ribosyltransferase, found in Streptococcus pneumoniae (strain Taiwan19F-14).